We begin with the raw amino-acid sequence, 103 residues long: Cell division protein FtsB (103 aa).

At 1-3 (MGK) the chain is on the cytoplasmic side. The helical transmembrane segment at 4 to 21 (LTLLLLALLVWLQYSLWF) threads the bilayer. Over 22 to 103 (GKNGIHDYSR…RAGGPAQNNR (82 aa)) the chain is Periplasmic. A coiled-coil region spans residues 38-62 (VQQATNAKLKARNDQLFAEIDDLNG).

Belongs to the FtsB family. In terms of assembly, part of a complex composed of FtsB, FtsL and FtsQ.

Its subcellular location is the cell inner membrane. Essential cell division protein. May link together the upstream cell division proteins, which are predominantly cytoplasmic, with the downstream cell division proteins, which are predominantly periplasmic. The polypeptide is Cell division protein FtsB (Cronobacter sakazakii (strain ATCC BAA-894) (Enterobacter sakazakii)).